The sequence spans 602 residues: ATP-dependent RNA helicase DeaD (602 aa).

The short motif at Met6–Ala34 is the Q motif element. The Helicase ATP-binding domain maps to Ile37 to Ile208. An ATP-binding site is contributed by Ala50–Thr57. The short motif at Asp156–Asp159 is the DEAD box element. One can recognise a Helicase C-terminal domain in the interval Lys231–Leu378.

It belongs to the DEAD box helicase family. DeaD/CsdA subfamily.

The protein localises to the cytoplasm. The catalysed reaction is ATP + H2O = ADP + phosphate + H(+). DEAD-box RNA helicase involved in various cellular processes at low temperature, including ribosome biogenesis, mRNA degradation and translation initiation. The polypeptide is ATP-dependent RNA helicase DeaD (Buchnera aphidicola subsp. Baizongia pistaciae (strain Bp)).